The chain runs to 156 residues: Small ribosomal subunit protein uS7 (156 aa).

The protein belongs to the universal ribosomal protein uS7 family. As to quaternary structure, part of the 30S ribosomal subunit. Contacts proteins S9 and S11.

One of the primary rRNA binding proteins, it binds directly to 16S rRNA where it nucleates assembly of the head domain of the 30S subunit. Is located at the subunit interface close to the decoding center, probably blocks exit of the E-site tRNA. The polypeptide is Small ribosomal subunit protein uS7 (Dehalococcoides mccartyi (strain ATCC BAA-2266 / KCTC 15142 / 195) (Dehalococcoides ethenogenes (strain 195))).